We begin with the raw amino-acid sequence, 257 residues long: tRNA (guanine-N(7)-)-methyltransferase (257 aa).

Residues 1 to 58 (MQPIEQPGTGPDDITPESQDTNTAESAESGAETGHPRRIRSFVRRAGRTSTGQQRAIN) are disordered. Residues 16 to 26 (PESQDTNTAES) are compositionally biased toward polar residues. The span at 36 to 47 (PRRIRSFVRRAG) shows a compositional bias: basic residues. E89, E114, D141, and D164 together coordinate S-adenosyl-L-methionine. D164 is a catalytic residue. Residue K168 participates in substrate binding. The interval 170-175 (RHNKRR) is interaction with RNA. Substrate is bound by residues D200 and 235-238 (TKFE).

It belongs to the class I-like SAM-binding methyltransferase superfamily. TrmB family.

The enzyme catalyses guanosine(46) in tRNA + S-adenosyl-L-methionine = N(7)-methylguanosine(46) in tRNA + S-adenosyl-L-homocysteine. Its pathway is tRNA modification; N(7)-methylguanine-tRNA biosynthesis. Its function is as follows. Catalyzes the formation of N(7)-methylguanine at position 46 (m7G46) in tRNA. This is tRNA (guanine-N(7)-)-methyltransferase from Ralstonia pickettii (strain 12J).